We begin with the raw amino-acid sequence, 494 residues long: Splicing regulatory glutamine/lysine-rich protein 1 (494 aa).

Residues 69–145 (RTVYVGNLNS…RPLKINHSNN (77 aa)) form the RRM domain. Phosphoserine occurs at positions 174 and 187. Residues 176–494 (ISAAIEPESG…ESPCSKADAV (319 aa)) are disordered. A compositionally biased stretch (basic and acidic residues) spans 183–192 (ESGKSNERKG). The segment covering 193-262 (GRSRSHTRSK…KSRSRSRSRD (70 aa)) has biased composition (basic residues). The segment covering 263-340 (KRKDTREKVK…DRSKETDEKR (78 aa)) has biased composition (basic and acidic residues). The residue at position 348 (threonine 348) is a Phosphothreonine. Over residues 357 to 373 (RRSRSTSRERRRRRSRS) the composition is skewed to basic residues. A compositionally biased stretch (basic and acidic residues) spans 404-474 (REKERDHISD…SPRTEDEGKV (71 aa)). Over residues 476-486 (HNGNCQPNEES) the composition is skewed to polar residues. Lysine 490 is covalently cross-linked (Glycyl lysine isopeptide (Lys-Gly) (interchain with G-Cter in SUMO2)).

It belongs to the splicing factor SR family. In terms of assembly, homodimer. Binds SFRS1, SFRS2, SFRS3 and SFRS6. Interacts with the spliceosome. Interacts with SREK1IP1.

It is found in the nucleus. Participates in the regulation of alternative splicing by modulating the activity of other splice facors. Inhibits the splicing activity of SFRS1, SFRS2 and SFRS6. Augments the splicing activity of SFRS3. In Mus musculus (Mouse), this protein is Splicing regulatory glutamine/lysine-rich protein 1 (Srek1).